Reading from the N-terminus, the 168-residue chain is uncharacterized protein (168 aa).

The tract at residues 1–52 (MVLGLASFPESLSSQSETATQPRRPSVKWDLGSDYRKGTEETTASGSNFRRE) is disordered. Residues 10-23 (ESLSSQSETATQPR) are compositionally biased toward polar residues. Residues 31–40 (LGSDYRKGTE) show a composition bias toward basic and acidic residues.

This is an uncharacterized protein from Mus musculus (Mouse).